Reading from the N-terminus, the 397-residue chain is Ribosomal RNA large subunit methyltransferase I (397 aa).

A PUA domain is found at 2–81; the sequence is SAQVILQPSR…ESIDNGFFLR (80 aa).

The protein belongs to the methyltransferase superfamily. RlmI family.

The protein resides in the cytoplasm. The enzyme catalyses cytidine(1962) in 23S rRNA + S-adenosyl-L-methionine = 5-methylcytidine(1962) in 23S rRNA + S-adenosyl-L-homocysteine + H(+). Its function is as follows. Specifically methylates the cytosine at position 1962 (m5C1962) of 23S rRNA. In Alteromonas mediterranea (strain DSM 17117 / CIP 110805 / LMG 28347 / Deep ecotype), this protein is Ribosomal RNA large subunit methyltransferase I.